The chain runs to 244 residues: tRNA pseudouridine synthase A (244 aa).

The active-site Nucleophile is Asp52. Tyr111 is a substrate binding site.

Belongs to the tRNA pseudouridine synthase TruA family. In terms of assembly, homodimer.

The enzyme catalyses uridine(38/39/40) in tRNA = pseudouridine(38/39/40) in tRNA. Functionally, formation of pseudouridine at positions 38, 39 and 40 in the anticodon stem and loop of transfer RNAs. This Thermosipho melanesiensis (strain DSM 12029 / CIP 104789 / BI429) protein is tRNA pseudouridine synthase A.